The chain runs to 213 residues: Octanoyltransferase (213 aa).

A BPL/LPL catalytic domain is found at 28 to 203 (GTSPETLLLL…RFPFLLDERL (176 aa)). Substrate is bound by residues 66–73 (RGGDVTFH), 133–135 (SIG), and 146–148 (GFA). Residue cysteine 164 is the Acyl-thioester intermediate of the active site.

Belongs to the LipB family.

The protein localises to the cytoplasm. The catalysed reaction is octanoyl-[ACP] + L-lysyl-[protein] = N(6)-octanoyl-L-lysyl-[protein] + holo-[ACP] + H(+). It participates in protein modification; protein lipoylation via endogenous pathway; protein N(6)-(lipoyl)lysine from octanoyl-[acyl-carrier-protein]: step 1/2. Its function is as follows. Catalyzes the transfer of endogenously produced octanoic acid from octanoyl-acyl-carrier-protein onto the lipoyl domains of lipoate-dependent enzymes. Lipoyl-ACP can also act as a substrate although octanoyl-ACP is likely to be the physiological substrate. The sequence is that of Octanoyltransferase from Geobacter metallireducens (strain ATCC 53774 / DSM 7210 / GS-15).